The primary structure comprises 118 residues: Large ribosomal subunit protein bL19 (118 aa).

This sequence belongs to the bacterial ribosomal protein bL19 family.

This protein is located at the 30S-50S ribosomal subunit interface and may play a role in the structure and function of the aminoacyl-tRNA binding site. The chain is Large ribosomal subunit protein bL19 from Saccharophagus degradans (strain 2-40 / ATCC 43961 / DSM 17024).